A 542-amino-acid chain; its full sequence is MAQKKAVTVKGKKATNGEEKPLAKRVTKSTKVQEEETVVPQSPSKKSRKQPVKEVPQFSEEDESDVEEQNDEQPGDDSDFETEEAAGLIDDEAEEDEEYNSDDEEDDDDDELEPGEVSKSEGADEVDESDDDEEAPVEKPVSKKSEKANSEKSEENRGIPKVKVGKIPLGTPKNQIVFVTNLPNEYLHKDLVALFAKFGRLSALQRFTNLNGNKSVLIAFDTSTGAEAVLQAKPKALTLGDNVLSVSQPRNKEENNERTVVVGLIGPNITKDDLKTFFEKVAPVEAVTISSNRLMPRAFVRLASVDDIPKALKLHSTELFSRFITVRRISQESISRTSELTLVVENVGKHESYSSDALEKIFKKFGDVEEIDVVCSKAVLAFVTFKQSDAATKALAQLDGKTVNKFEWKLHRFERSTSGRAILVTNLTSDATEADLRKVFNDSGEIESIIMLGQKAVVKFKDDEGFCKSFLANESIVNNAPIFIEPNSLLKHRLLKKRLAIGQTRAPRKFQKDTKPNFGKKPFNKRPAQENGGKSFVKRARF.

The disordered stretch occupies residues 1–166; the sequence is MAQKKAVTVK…RGIPKVKVGK (166 aa). Phosphoserine is present on residues S42 and S44. The segment covering 59 to 114 has biased composition (acidic residues); it reads SEEDESDVEEQNDEQPGDDSDFETEEAAGLIDDEAEEDEEYNSDDEEDDDDDELEP. A phosphoserine mark is found at S120, S129, and S142. The segment covering 123–135 has biased composition (acidic residues); that stretch reads ADEVDESDDDEEA. Over residues 136 to 158 the composition is skewed to basic and acidic residues; that stretch reads PVEKPVSKKSEKANSEKSEENRG. 4 RRM domains span residues 175–251, 258–331, 340–429, and 420–489; these read QIVF…QPRN, RTVV…RISQ, LTLV…NLTS, and RAIL…PNSL. S304 is modified (phosphoserine). At S330 the chain carries Phosphoserine; by PKA. At S443 the chain carries Phosphoserine. Residues 505–542 form a disordered region; sequence RAPRKFQKDTKPNFGKKPFNKRPAQENGGKSFVKRARF.

Post-translationally, the N-terminus is blocked.

It localises to the nucleus. Its function is as follows. Its capacity to bind DNA and protein(s), and its differential expression during development suggest a role in the regulation of gene expression during Drosophila development. It could, in interaction with other factors, be required for the translation of instructions provided by pattern forming genes and controls, via chromatin changes, the activity of genes critical for the process of morphogenesis of several embryonic territories. This is DNA-binding protein modulo (mod) from Drosophila melanogaster (Fruit fly).